The following is a 540-amino-acid chain: Chaperonin GroEL 3 (540 aa).

ATP-binding positions include 30 to 33 (TLGP), lysine 51, 87 to 91 (DGTTT), glycine 415, 479 to 481 (NAA), and aspartate 495.

Belongs to the chaperonin (HSP60) family. As to quaternary structure, forms a cylinder of 14 subunits composed of two heptameric rings stacked back-to-back. Interacts with the co-chaperonin GroES.

The protein localises to the cytoplasm. It carries out the reaction ATP + H2O + a folded polypeptide = ADP + phosphate + an unfolded polypeptide.. In terms of biological role, together with its co-chaperonin GroES, plays an essential role in assisting protein folding. The GroEL-GroES system forms a nano-cage that allows encapsulation of the non-native substrate proteins and provides a physical environment optimized to promote and accelerate protein folding. The polypeptide is Chaperonin GroEL 3 (Burkholderia cenocepacia (strain HI2424)).